The following is a 133-amino-acid chain: Large ribosomal subunit protein bL19 (133 aa).

Residues 114–133 (IAERQMTAASKEEPAEKSEA) are disordered. Basic and acidic residues predominate over residues 123 to 133 (SKEEPAEKSEA).

The protein belongs to the bacterial ribosomal protein bL19 family.

Its function is as follows. This protein is located at the 30S-50S ribosomal subunit interface and may play a role in the structure and function of the aminoacyl-tRNA binding site. This is Large ribosomal subunit protein bL19 from Phenylobacterium zucineum (strain HLK1).